The chain runs to 388 residues: STE20-related kinase adapter protein strd-1 (388 aa).

The Protein kinase domain occupies 52 to 335 (YDCVRYMGTC…ASDLKSSAWL (284 aa)). Residues 58-66 (MGTCNGGQI) and lysine 82 each bind ATP.

This sequence belongs to the protein kinase superfamily. STE Ser/Thr protein kinase family. STE20 subfamily. As to quaternary structure, interacts with sad-1. Interacts with par-4. Expressed in nervous system, pharynx and excretory canal. Expressed in germline.

The protein resides in the perikaryon. It is found in the nucleus. The protein localises to the cell projection. It localises to the dendrite. Its subcellular location is the axon. The protein resides in the synapse. It is found in the cytoplasm. The protein localises to the cell cortex. Functionally, pseudokinase which may act as an adapter for kinases sad-1 and par-4 and thereby is involved in several developmental processes. Regulates cell-autonomously both neuronal polarity and synaptic organization when bound to sad-1. Required for sad-1 localization to synapses. Required to establish germline stem cell (GSC) quiescence during dauer development, to promote cell shedding during embryogenesis and to control asymmetric cell division of the Q.p neuroblast lineage, probably when bound to par-4. May be involved in maintaining the integrity of the early embryonic cortex when bound to par-4. The sequence is that of STE20-related kinase adapter protein strd-1 from Caenorhabditis elegans.